Reading from the N-terminus, the 150-residue chain is SsrA-binding protein (150 aa).

Residues Lys-129–His-150 form a disordered region.

It belongs to the SmpB family.

The protein localises to the cytoplasm. Functionally, required for rescue of stalled ribosomes mediated by trans-translation. Binds to transfer-messenger RNA (tmRNA), required for stable association of tmRNA with ribosomes. tmRNA and SmpB together mimic tRNA shape, replacing the anticodon stem-loop with SmpB. tmRNA is encoded by the ssrA gene; the 2 termini fold to resemble tRNA(Ala) and it encodes a 'tag peptide', a short internal open reading frame. During trans-translation Ala-aminoacylated tmRNA acts like a tRNA, entering the A-site of stalled ribosomes, displacing the stalled mRNA. The ribosome then switches to translate the ORF on the tmRNA; the nascent peptide is terminated with the 'tag peptide' encoded by the tmRNA and targeted for degradation. The ribosome is freed to recommence translation, which seems to be the essential function of trans-translation. The polypeptide is SsrA-binding protein (Syntrophotalea carbinolica (strain DSM 2380 / NBRC 103641 / GraBd1) (Pelobacter carbinolicus)).